Here is a 160-residue protein sequence, read N- to C-terminus: SsrA-binding protein (160 aa).

The protein belongs to the SmpB family.

The protein resides in the cytoplasm. Required for rescue of stalled ribosomes mediated by trans-translation. Binds to transfer-messenger RNA (tmRNA), required for stable association of tmRNA with ribosomes. tmRNA and SmpB together mimic tRNA shape, replacing the anticodon stem-loop with SmpB. tmRNA is encoded by the ssrA gene; the 2 termini fold to resemble tRNA(Ala) and it encodes a 'tag peptide', a short internal open reading frame. During trans-translation Ala-aminoacylated tmRNA acts like a tRNA, entering the A-site of stalled ribosomes, displacing the stalled mRNA. The ribosome then switches to translate the ORF on the tmRNA; the nascent peptide is terminated with the 'tag peptide' encoded by the tmRNA and targeted for degradation. The ribosome is freed to recommence translation, which seems to be the essential function of trans-translation. This Novosphingobium aromaticivorans (strain ATCC 700278 / DSM 12444 / CCUG 56034 / CIP 105152 / NBRC 16084 / F199) protein is SsrA-binding protein.